A 470-amino-acid polypeptide reads, in one-letter code: Putative multidrug resistance protein MdtD (470 aa).

The Periplasmic portion of the chain corresponds to 1–11; the sequence is MTELPDNTRWQ. A helical transmembrane segment spans residues 12–32; that stretch reads LWIVAFGFFMQSLDTTIVNTA. At 33 to 48 the chain is on the cytoplasmic side; that stretch reads LPSMAKSLGESPLHMH. A helical transmembrane segment spans residues 49–69; that stretch reads MVVVSYVLTVAVMLPASGWLA. Over 70-76 the chain is Periplasmic; that stretch reads DKIGVRN. A helical transmembrane segment spans residues 77–97; that stretch reads IFFAAIVLFTLGSLFCALSGT. Topologically, residues 98-101 are cytoplasmic; sequence LNQL. Residues 102–124 form a helical membrane-spanning segment; the sequence is VLARVLQGVGGAMMVPVGRLTVM. Residues 125–137 lie on the Periplasmic side of the membrane; that stretch reads KIVPRAQYMAAMT. The helical transmembrane segment at 138 to 158 threads the bilayer; the sequence is FVTLPGQIGPLLGPALGGVLV. The Cytoplasmic portion of the chain corresponds to 159–164; the sequence is EYASWH. A helical transmembrane segment spans residues 165–185; sequence WIFLINIPVGIVGAMATFMLM. Over 186–196 the chain is Periplasmic; the sequence is PNYIIETRRFD. The helical transmembrane segment at 197–217 threads the bilayer; the sequence is LPGFLLLAIGMAVLTLALDGS. The Cytoplasmic portion of the chain corresponds to 218 to 224; that stretch reads KSMGISP. Residues 225-245 form a helical membrane-spanning segment; the sequence is WTLAGLAAGGAAAILLYLFHA. Residues 246–262 lie on the Periplasmic side of the membrane; the sequence is KKNSGALFSLRLFRTPT. A helical membrane pass occupies residues 263 to 283; that stretch reads FSLGLLGSFAGRIGSGMLPFM. Over 284-285 the chain is Cytoplasmic; sequence TP. A helical membrane pass occupies residues 286–306; that stretch reads VFLQIGLGFSPFHAGLMMIPM. Over 307–341 the chain is Periplasmic; it reads VLGSMGMKRIVVQIVNRFGYRRVLVATTLGLALVS. A helical membrane pass occupies residues 342–362; the sequence is LLFMSVALLGWYYLLPLVLLL. The Cytoplasmic segment spans residues 363 to 395; it reads QGMVNSARFSSMNTLTLKDLPDTLASSGNSLLS. The helical transmembrane segment at 396 to 416 threads the bilayer; that stretch reads MIMQLSMSIGVTIAGMLLGMF. The Periplasmic portion of the chain corresponds to 417–430; sequence GQQHIGIDSSATHH. The chain crosses the membrane as a helical span at residues 431-451; that stretch reads VFMYTWLCMAVIIALPAIIFA. Residues 452-470 are Cytoplasmic-facing; that stretch reads RVPNDTQQNMVISRRKRSL.

The protein belongs to the major facilitator superfamily. TCR/Tet family.

Its subcellular location is the cell inner membrane. This chain is Putative multidrug resistance protein MdtD, found in Salmonella typhimurium (strain LT2 / SGSC1412 / ATCC 700720).